The chain runs to 252 residues: Probable transcriptional regulatory protein Ava_1228 (252 aa).

Belongs to the TACO1 family.

The protein localises to the cytoplasm. In Trichormus variabilis (strain ATCC 29413 / PCC 7937) (Anabaena variabilis), this protein is Probable transcriptional regulatory protein Ava_1228.